The chain runs to 173 residues: Alkyl hydroperoxide reductase AhpD (173 aa).

The Proton donor role is filled by Cys-131. Residues Cys-131 and Cys-134 are joined by a disulfide bond. The active-site Cysteine sulfenic acid (-SOH) intermediate is Cys-134.

The protein belongs to the AhpD family.

The enzyme catalyses N(6)-[(R)-dihydrolipoyl]-L-lysyl-[lipoyl-carrier protein] + a hydroperoxide = N(6)-[(R)-lipoyl]-L-lysyl-[lipoyl-carrier protein] + an alcohol + H2O. Antioxidant protein with alkyl hydroperoxidase activity. Required for the reduction of the AhpC active site cysteine residues and for the regeneration of the AhpC enzyme activity. This chain is Alkyl hydroperoxide reductase AhpD, found in Maricaulis maris (strain MCS10) (Caulobacter maris).